A 434-amino-acid chain; its full sequence is Enolase (434 aa).

Gln-167 serves as a coordination point for (2R)-2-phosphoglycerate. The Proton donor role is filled by Glu-209. Positions 246, 291, and 318 each coordinate Mg(2+). (2R)-2-phosphoglycerate-binding residues include Lys-343, Arg-372, Ser-373, and Lys-394. Residue Lys-343 is the Proton acceptor of the active site.

This sequence belongs to the enolase family. In terms of assembly, component of the RNA degradosome, a multiprotein complex involved in RNA processing and mRNA degradation. Mg(2+) is required as a cofactor.

The protein localises to the cytoplasm. It localises to the secreted. It is found in the cell surface. The enzyme catalyses (2R)-2-phosphoglycerate = phosphoenolpyruvate + H2O. It functions in the pathway carbohydrate degradation; glycolysis; pyruvate from D-glyceraldehyde 3-phosphate: step 4/5. Catalyzes the reversible conversion of 2-phosphoglycerate (2-PG) into phosphoenolpyruvate (PEP). It is essential for the degradation of carbohydrates via glycolysis. The chain is Enolase from Buchnera aphidicola subsp. Schizaphis graminum (strain Sg).